Consider the following 242-residue polypeptide: Eukaryotic translation initiation factor 4E type 1B (242 aa).

Residues 1–42 are disordered; the sequence is MLAVEVSEAEGGIREWEEEEKEEEAAERTPTGEKSPNSPRTL. The span at 16–25 shows a compositional bias: acidic residues; that stretch reads WEEEEKEEEA. The span at 32–41 shows a compositional bias: polar residues; the sequence is GEKSPNSPRT. Positions 62 to 65 are EIF4EBP1/2/3 binding; that stretch reads HPLQ. Residue 81 to 82 participates in mRNA binding; it reads WQ. Residues 98–102 are EIF4EBP1/2/3 binding; it reads WALYS. Residue 127–128 coordinates mRNA; that stretch reads WE. The tract at residues 157 to 164 is EIF4EBP1/2/3 binding; that stretch reads ETLLCLIG. Residues 182–187 and 230–232 contribute to the mRNA site; these read RTKGDK and TKS.

It belongs to the eukaryotic initiation factor 4E family. In terms of assembly, eIF4F is a multi-subunit complex, the composition of which varies with external and internal environmental conditions. It is composed of at least EIF4A, EIF4E and EIF4G.

Its function is as follows. Recognizes and binds the 7-methylguanosine-containing mRNA cap during an early step in the initiation of protein synthesis and facilitates ribosome binding by inducing the unwinding of the mRNAs secondary structure. The polypeptide is Eukaryotic translation initiation factor 4E type 1B (EIF4E1B) (Homo sapiens (Human)).